A 444-amino-acid polypeptide reads, in one-letter code: Probable ribonuclease FAU-1 (444 aa).

Belongs to the FAU-1 family.

Probable RNase involved in rRNA stability through maturation and/or degradation of precursor rRNAs. Binds to RNA in loop regions with AU-rich sequences. The chain is Probable ribonuclease FAU-1 from Pyrobaculum arsenaticum (strain DSM 13514 / JCM 11321 / PZ6).